A 131-amino-acid polypeptide reads, in one-letter code: Small ribosomal subunit protein uS11 (131 aa).

Belongs to the universal ribosomal protein uS11 family. In terms of assembly, part of the 30S ribosomal subunit. Interacts with proteins S7 and S18. Binds to IF-3.

Functionally, located on the platform of the 30S subunit, it bridges several disparate RNA helices of the 16S rRNA. Forms part of the Shine-Dalgarno cleft in the 70S ribosome. In Bacillus pumilus (strain SAFR-032), this protein is Small ribosomal subunit protein uS11.